Here is a 465-residue protein sequence, read N- to C-terminus: Solute carrier family 7 member 12 (465 aa).

Topologically, residues 1–6 (MQLLRA) are cytoplasmic. Residues 7-27 (LGVFHVSMILFSATLGTGIFV) traverse the membrane as a helical segment. Residues 28–39 (TPKAVLKYSSLN) lie on the Extracellular side of the membrane. The helical transmembrane segment at 40–60 (IPVSLSIWAGCGLLSIMSALC) threads the bilayer. Residues 61–81 (NAEIATTYPLSGASYYFLKRT) lie on the Cytoplasmic side of the membrane. A helical transmembrane segment spans residues 82 to 102 (LGSSVAFLSLWIKLFAHFLGI). Over 103-132 (GAQCLLIATSVIQCFYSGCPAPELPTKCLA) the chain is Extracellular. Residues 133–153 (LAILWSFGIVSARGIKTVAWF) traverse the membrane as a helical segment. Position 154 (Asn154) is a topological domain, cytoplasmic. Residues 155–175 (TVSSFIKLSVLCLISLTVLLV) traverse the membrane as a helical segment. At 176–202 (NGKKENVSRFENALDAELPNASQIADA) the chain is on the extracellular side. The helical transmembrane segment at 203–223 (ILQVSYSYLGSSVLIVIAGEI) threads the bilayer. Topologically, residues 224-234 (KRPTETIPKTL) are cytoplasmic. The chain crosses the membrane as a helical span at residues 235–255 (IYGISIVTVLYLLTNISYLAV). At 256-280 (LTSQEIIFSDSVGVTWMNRVFPSIQ) the chain is on the extracellular side. The chain crosses the membrane as a helical span at residues 281–301 (WISSFLISAFLLGSVSCGIVS). Topologically, residues 302 to 327 (ASRVFYSASQEGEFPSIYSMLNDHHS) are cytoplasmic. A helical transmembrane segment spans residues 328–351 (PAVADIQIVILSSVAIISSSIIYL). Over 352 to 356 (VKYVS) the chain is Extracellular. Residues 357–375 (LGSFCINLLQMIGLLKIRY) traverse the membrane as a helical segment. Topologically, residues 376 to 386 (QNPDIPRPYKV) are cytoplasmic. Residues 387–407 (WLPFIFGSIALSLFLIFTPVI) traverse the membrane as a helical segment. Residues 408–409 (QS) lie on the Extracellular side of the membrane. The helical transmembrane segment at 410–430 (PSIEHVYQVVFLFCGFLCYWL) threads the bilayer. The Cytoplasmic segment spans residues 431–465 (QANLNGHATCFDTITCYCQLLFNISPSEDPEEQKN).

It belongs to the amino acid-polyamine-organocation (APC) superfamily. As to quaternary structure, probably forms multimers, perhaps with an unknown protein(s). Expressed in kidney and red blood cells (at protein level). Expressed in kidney along the collecting ducts in the cortex, outer and inner medulla. May be expressed in placenta, lungs, spleen and skeletal muscles.

The protein localises to the apical cell membrane. The protein resides in the basal cell membrane. It is found in the cytoplasm. In terms of biological role, probably mediates sodium- and chloride-independent uptake of neutral amino acids. This Mus musculus (Mouse) protein is Solute carrier family 7 member 12.